Here is a 240-residue protein sequence, read N- to C-terminus: Ubiquinone biosynthesis O-methyltransferase (240 aa).

The S-adenosyl-L-methionine site is built by Arg44, Gly64, Asp85, and Met129.

It belongs to the methyltransferase superfamily. UbiG/COQ3 family.

The catalysed reaction is a 3-demethylubiquinol + S-adenosyl-L-methionine = a ubiquinol + S-adenosyl-L-homocysteine + H(+). The enzyme catalyses a 3-(all-trans-polyprenyl)benzene-1,2-diol + S-adenosyl-L-methionine = a 2-methoxy-6-(all-trans-polyprenyl)phenol + S-adenosyl-L-homocysteine + H(+). It functions in the pathway cofactor biosynthesis; ubiquinone biosynthesis. Functionally, O-methyltransferase that catalyzes the 2 O-methylation steps in the ubiquinone biosynthetic pathway. The chain is Ubiquinone biosynthesis O-methyltransferase from Escherichia coli O7:K1 (strain IAI39 / ExPEC).